Reading from the N-terminus, the 747-residue chain is DNA repair and recombination protein RAD54-like (747 aa).

Residues 1–41 (MRRSLAPSQLAKRKPEGRSCDDEDWQPGLVTPRKRKSSSET) are disordered. The required for chromatin remodeling, strand pairing activities and coupling of ATPase activity stretch occupies residues 2 to 9 (RRSLAPSQ). Ser38 is modified (phosphoserine). Positions 170 to 345 (SRRIPGSHGC…FSLVHFVNSG (176 aa)) constitute a Helicase ATP-binding domain. ATP is bound at residue 183 to 190 (DEMGLGKT). Residues 296-299 (DEGH) carry the DEGH box motif. The Helicase C-terminal domain maps to 500 to 653 (VLDYILAVTR…CVVDEEQDVE (154 aa)). Lys515 carries the N6-acetyllysine modification. At Ser572 the chain carries Phosphoserine; by NEK1.

It belongs to the SNF2/RAD54 helicase family. As to quaternary structure, homohexamer. Interacts (via N-terminus) with RAD51. Interacts with NAP1L1. Interacts with BRD9; this interaction orchestrates RAD51-RAD54 complex formation. Post-translationally, acetylated. Acetylation promotes interaction with BRD9, and subsequently with RAD54, which is essential for homologous recombination (HR). In terms of processing, phosphorylated. Phosphorylation at Ser-572 by NEK1 specifically in G2 phase allows efficient removal of RAD51 filaments from DNA.

It localises to the nucleus. The catalysed reaction is ATP + H2O = ADP + phosphate + H(+). Its function is as follows. Plays an essential role in homologous recombination (HR) which is a major pathway for repairing DNA double-strand breaks (DSBs), single-stranded DNA (ssDNA) gaps, and stalled or collapsed replication forks. Acts as a molecular motor during the homology search and guides RAD51 ssDNA along a donor dsDNA thereby changing the homology search from the diffusion-based mechanism to a motor-guided mechanism. Also plays an essential role in RAD51-mediated synaptic complex formation which consists of three strands encased in a protein filament formed once homology is recognized. Once DNA strand exchange occured, dissociates RAD51 from nucleoprotein filaments formed on dsDNA. This chain is DNA repair and recombination protein RAD54-like (RAD54L), found in Homo sapiens (Human).